The following is a 246-amino-acid chain: Exosome complex component Rrp41 (246 aa).

This sequence belongs to the RNase PH family. Rrp41 subfamily. In terms of assembly, component of the archaeal exosome complex. Forms a hexameric ring-like arrangement composed of 3 Rrp41-Rrp42 heterodimers. The hexameric ring associates with a trimer of Rrp4 and/or Csl4 subunits.

Its subcellular location is the cytoplasm. In terms of biological role, catalytic component of the exosome, which is a complex involved in RNA degradation. Has 3'-&gt;5' exoribonuclease activity. Can also synthesize heteromeric RNA-tails. In Pyrobaculum neutrophilum (strain DSM 2338 / JCM 9278 / NBRC 100436 / V24Sta) (Thermoproteus neutrophilus), this protein is Exosome complex component Rrp41.